The primary structure comprises 409 residues: Runt-related transcription factor 3 (409 aa).

Disordered regions lie at residues 1-51 (MRIP…RTRP), 177-248 (GPRE…QFDR), and 346-409 (AGGG…WRPY). Residues 7–17 (PSTSRRFTPPS) show a composition bias toward polar residues. Residues 55–183 (SMVDVLADHA…TVDGPREPRR (129 aa)) enclose the Runt domain. The segment covering 187-204 (KIEDQTKAFPDRFGDLRM) has biased composition (basic and acidic residues). Lys-193 participates in a covalent cross-link: Glycyl lysine isopeptide (Lys-Gly) (interchain with G-Cter in SUMO2). Polar residues predominate over residues 207–238 (TPSTPSPRGSLSTTSHFSSQAQTPIQGSSDLN). Ser-241 is modified (phosphoserine). 2 stretches are compositionally biased toward polar residues: residues 355–376 (RMLT…NPSL) and 387–396 (SHSNSPTALS). Residues 400–409 (RMDEAVWRPY) are compositionally biased toward basic and acidic residues.

As to quaternary structure, heterodimer with CBFB. RUNX3 binds DNA as a monomer and through the Runt domain. DNA-binding is increased by heterodimerization. Interacts with TLE1 and SUV39H1. The tyrosine phosphorylated form (via runt domain) interacts with SRC (via protein kinase domain). Interacts with FYN and LCK. Interacts with FOXP3. Interacts with ZFHX3. Interacts with TBX21. Phosphorylated on tyrosine residues by SRC. Phosphorylated by LCK and FYN.

Its subcellular location is the nucleus. It localises to the cytoplasm. Functionally, forms the heterodimeric complex core-binding factor (CBF) with CBFB. RUNX members modulate the transcription of their target genes through recognizing the core consensus binding sequence 5'-TGTGGT-3', or very rarely, 5'-TGCGGT-3', within their regulatory regions via their runt domain, while CBFB is a non-DNA-binding regulatory subunit that allosterically enhances the sequence-specific DNA-binding capacity of RUNX. The heterodimers bind to the core site of a number of enhancers and promoters, including murine leukemia virus, polyomavirus enhancer, T-cell receptor enhancers, LCK, IL3 and GM-CSF promoters. May be involved in the control of cellular proliferation and/or differentiation. In association with ZFHX3, up-regulates CDKN1A promoter activity following TGF-beta stimulation. CBF complexes repress ZBTB7B transcription factor during cytotoxic (CD8+) T cell development. They bind to RUNX-binding sequence within the ZBTB7B locus acting as transcriptional silencer and allowing for cytotoxic T cell differentiation. CBF complexes binding to the transcriptional silencer is essential for recruitment of nuclear protein complexes that catalyze epigenetic modifications to establish epigenetic ZBTB7B silencing. Necessary for the development and survival of sensory neurons expressing parvalbumin. This chain is Runt-related transcription factor 3 (Runx3), found in Mus musculus (Mouse).